Here is a 144-residue protein sequence, read N- to C-terminus: Large ribosomal subunit protein uL15 (144 aa).

The segment at 1 to 56 (MELNNLKPAAGAKHAKRRVGRGIGSGLGKTAGRGHKGQKSRSGGFHKVGFEGGQMP) is disordered. Residues 21-31 (RGIGSGLGKTA) are compositionally biased toward gly residues.

This sequence belongs to the universal ribosomal protein uL15 family. In terms of assembly, part of the 50S ribosomal subunit.

Its function is as follows. Binds to the 23S rRNA. The protein is Large ribosomal subunit protein uL15 of Burkholderia multivorans (strain ATCC 17616 / 249).